The sequence spans 411 residues: Multidrug resistance protein MdtH (411 aa).

The next 11 membrane-spanning stretches (helical) occupy residues 13–33, 45–65, 73–95, 99–116, 139–159, 165–185, 213–233, 243–263, 288–308, 340–360, and 365–385; these read YFLL…FPLI, ALLV…LGIF, LGAK…FMGI, PWLL…GTLF, LLMI…SWLL, LVCL…AWLL, YVFT…ILPI, AAVR…LYPI, IIPI…GIFY, LGLA…YDMG, and IPQL…LGFY.

It belongs to the major facilitator superfamily. DHA1 family. MdtH (TC 2.A.1.2.21) subfamily.

It is found in the cell membrane. The chain is Multidrug resistance protein MdtH from Baumannia cicadellinicola subsp. Homalodisca coagulata.